Here is a 1037-residue protein sequence, read N- to C-terminus: Sentrin-specific protease 7 (1037 aa).

Over residues 1–10 (MDRARPGRRR) the composition is skewed to basic residues. Disordered regions lie at residues 1–28 (MDRARPGRRRASSEIVTEGKRKKSSPAD) and 182–420 (ASLS…SEEN). 4 positions are modified to phosphoserine: S12, S13, S25, and S189. 2 stretches are compositionally biased toward polar residues: residues 182 to 211 (ASLSDTASPKSEELSSSADGSLESCQNVNH) and 253 to 263 (TPQSKDFNSGN). A compositionally biased stretch (basic residues) spans 289 to 299 (VSRKRKKRGRS). Over residues 300 to 309 (NFHNSHNPKS) the composition is skewed to polar residues. 2 stretches are compositionally biased toward basic and acidic residues: residues 310–320 (SVDKSTEYIKE) and 330–340 (KLEESNEDSHQ). Residues 381–399 (NKSSESSVSSEVAENSSAA) are compositionally biased toward low complexity. Residues S432 and S433 each carry the phosphoserine modification. Residues 747–1037 (LGVTNEDLEC…HLQQQKGSSS (291 aa)) are protease. H847 is an active-site residue. A disordered region spans residues 873–910 (EFQDQQSQHDNKTIDNDPHTTSTVFTSAEESQSTETSM). Basic and acidic residues predominate over residues 879-890 (SQHDNKTIDNDP). The segment covering 898–910 (TSAEESQSTETSM) has biased composition (low complexity). D926 is an active-site residue. C979 acts as the Nucleophile in catalysis.

It belongs to the peptidase C48 family.

It localises to the cytoplasm. Protease that acts as a positive regulator of the cGAS-STING pathway by catalyzing desumoylation of CGAS. Desumoylation of CGAS promotes DNA-binding activity of CGAS, subsequent oligomerization and activation. Deconjugates SUMO2 and SUMO3 from targeted proteins, but not SUMO1. Catalyzes the deconjugation of poly-SUMO2 and poly-SUMO3 chains. Has very low efficiency in processing full-length SUMO proteins to their mature forms. The sequence is that of Sentrin-specific protease 7 (Senp7) from Rattus norvegicus (Rat).